We begin with the raw amino-acid sequence, 102 residues long: Small ribosomal subunit protein uS10 (102 aa).

Belongs to the universal ribosomal protein uS10 family. As to quaternary structure, part of the 30S ribosomal subunit.

Its function is as follows. Involved in the binding of tRNA to the ribosomes. The chain is Small ribosomal subunit protein uS10 from Roseiflexus castenholzii (strain DSM 13941 / HLO8).